Reading from the N-terminus, the 355-residue chain is 45 kDa calcium-binding protein (355 aa).

The first 29 residues, 1–29, serve as a signal peptide directing secretion; the sequence is MASRQGPLCGLAPCCLWLLGVILLMNASA. N-linked (GlcNAc...) asparagine glycosylation occurs at N26. EF-hand domains are found at residues 91–126 and 130–165; these read KSRRKLMVIFSKVDLNTDRRISAKEMQKWIMQKTAE and EAVAESRAHFRAVDPDGDGHVSWDEYKVKFLATKGH. A Phosphoserine modification is found at S92. Residues D104, N106, D108, R110, E115, D143, D145, D147, H149, and E154 each coordinate Ca(2+). Phosphothreonine is present on residues T186 and T210. 3 EF-hand domains span residues 226 to 261, 271 to 306, and 307 to 342; these read MLQFMVKEIIRDLDQDGDKKLSLSEFISLPVGTVEN, WVRDRKREFEELIDANHDGIVTMAELEDYMDPMNEF, and SALNEAKQMIAIADENQNHYLEPEEVLKYSEFFTGS. The Ca(2+) site is built by D239, D241, D243, K245, and E250. Residue T258 is modified to Phosphothreonine. Residues D284, N286, and D288 each coordinate Ca(2+). The residue at position 292 (T292) is a Phosphothreonine. Ca(2+)-binding residues include E295, D320, N322, N324, Y326, and E331. The interval 302-355 is necessary for intracellular retention in Golgi apparatus lumen; sequence PMNEFSALNEAKQMIAIADENQNHYLEPEEVLKYSEFFTGSKLVDYARSVHEEF.

Belongs to the CREC family.

It localises to the golgi apparatus lumen. May regulate calcium-dependent activities in the endoplasmic reticulum lumen or post-ER compartment. The chain is 45 kDa calcium-binding protein (SDF4) from Capra hircus (Goat).